A 131-amino-acid polypeptide reads, in one-letter code: Fluoride-specific ion channel FluC 1 (131 aa).

4 helical membrane-spanning segments follow: residues 4 to 24 (LALP…GAWL), 40 to 60 (HWGT…VLAL), 73 to 93 (LILL…TFAV), and 108 to 128 (LVLA…GVGL). Na(+) contacts are provided by Gly83 and Ser86.

The protein belongs to the fluoride channel Fluc/FEX (TC 1.A.43) family.

The protein localises to the cell inner membrane. The enzyme catalyses fluoride(in) = fluoride(out). Its activity is regulated as follows. Na(+) is not transported, but it plays an essential structural role and its presence is essential for fluoride channel function. Its function is as follows. Fluoride-specific ion channel. Important for reducing fluoride concentration in the cell, thus reducing its toxicity. This is Fluoride-specific ion channel FluC 1 from Prochlorococcus marinus (strain MIT 9313).